A 906-amino-acid polypeptide reads, in one-letter code: Protein translocase subunit SecA (906 aa).

ATP is bound by residues Gln87, 105-109 (GEGKT), and Asp521. Positions 849-865 (STATAAEPAPEASQSQS) are enriched in low complexity. A disordered region spans residues 849–897 (STATAAEPAPEASQSQSTNDATASQNPPITEVEASKVGRNQPCPCGSGK). A compositionally biased stretch (polar residues) spans 866 to 876 (TNDATASQNPP). Residues Cys891, Cys893, Cys902, and Cys903 each contribute to the Zn(2+) site.

The protein belongs to the SecA family. In terms of assembly, monomer and homodimer. Part of the essential Sec protein translocation apparatus which comprises SecA, SecYEG and auxiliary proteins SecDF-YajC and YidC. Requires Zn(2+) as cofactor.

The protein localises to the cell inner membrane. It localises to the cytoplasm. It carries out the reaction ATP + H2O + cellular proteinSide 1 = ADP + phosphate + cellular proteinSide 2.. Its function is as follows. Part of the Sec protein translocase complex. Interacts with the SecYEG preprotein conducting channel. Has a central role in coupling the hydrolysis of ATP to the transfer of proteins into and across the cell membrane, serving both as a receptor for the preprotein-SecB complex and as an ATP-driven molecular motor driving the stepwise translocation of polypeptide chains across the membrane. The polypeptide is Protein translocase subunit SecA (Dichelobacter nodosus (strain VCS1703A)).